The primary structure comprises 464 residues: ATP synthase subunit beta 1 (464 aa).

153 to 160 (GGAGVGKT) contacts ATP.

This sequence belongs to the ATPase alpha/beta chains family. As to quaternary structure, F-type ATPases have 2 components, CF(1) - the catalytic core - and CF(0) - the membrane proton channel. CF(1) has five subunits: alpha(3), beta(3), gamma(1), delta(1), epsilon(1). CF(0) has three main subunits: a(1), b(2) and c(9-12). The alpha and beta chains form an alternating ring which encloses part of the gamma chain. CF(1) is attached to CF(0) by a central stalk formed by the gamma and epsilon chains, while a peripheral stalk is formed by the delta and b chains.

The protein resides in the cell inner membrane. The catalysed reaction is ATP + H2O + 4 H(+)(in) = ADP + phosphate + 5 H(+)(out). Functionally, produces ATP from ADP in the presence of a proton gradient across the membrane. The catalytic sites are hosted primarily by the beta subunits. This Burkholderia mallei (strain SAVP1) protein is ATP synthase subunit beta 1.